The primary structure comprises 83 residues: Protein midgut expression 1 (83 aa).

Endoderm-specific pattern of expression during embryogenesis; anterior and posterior midgut primordia.

Its function is as follows. Involved in morphogenesis and development. The chain is Protein midgut expression 1 (mex1) from Drosophila melanogaster (Fruit fly).